The primary structure comprises 160 residues: Cyclic pyranopterin monophosphate synthase (160 aa).

Substrate-binding positions include 73 to 75 (LCH) and 110 to 111 (ME). Asp125 is a catalytic residue.

The protein belongs to the MoaC family. In terms of assembly, homohexamer; trimer of dimers.

The enzyme catalyses (8S)-3',8-cyclo-7,8-dihydroguanosine 5'-triphosphate = cyclic pyranopterin phosphate + diphosphate. Its pathway is cofactor biosynthesis; molybdopterin biosynthesis. In terms of biological role, catalyzes the conversion of (8S)-3',8-cyclo-7,8-dihydroguanosine 5'-triphosphate to cyclic pyranopterin monophosphate (cPMP). The sequence is that of Cyclic pyranopterin monophosphate synthase from Pseudomonas aeruginosa (strain LESB58).